The sequence spans 239 residues: Orotidine 5'-phosphate decarboxylase (239 aa).

Substrate-binding positions include D15, K37, 64-73, T126, R187, Q196, G216, and R217; that span reads DLKFHDIPNT. K66 acts as the Proton donor in catalysis.

The protein belongs to the OMP decarboxylase family. Type 1 subfamily. In terms of assembly, homodimer.

It carries out the reaction orotidine 5'-phosphate + H(+) = UMP + CO2. Its pathway is pyrimidine metabolism; UMP biosynthesis via de novo pathway; UMP from orotate: step 2/2. In terms of biological role, catalyzes the decarboxylation of orotidine 5'-monophosphate (OMP) to uridine 5'-monophosphate (UMP). The polypeptide is Orotidine 5'-phosphate decarboxylase (Geobacter sulfurreducens (strain ATCC 51573 / DSM 12127 / PCA)).